A 559-amino-acid chain; its full sequence is Regulatory protein PHO2 (559 aa).

Disordered regions lie at residues 16–88 (ATDL…KGEA), 132–158 (LRKK…DYDR), 293–333 (INSN…AKDN), and 534–559 (PTDS…HRWI). Composition is skewed to low complexity over residues 24-52 (HDQQ…IQTQ) and 63-74 (NDMSASSNASDS). The homeobox DNA-binding region spans 77–136 (QRPKRTRAKGEALDVLKRKFEINPTPSLVERKKISDLIGMPEKNVRIWFQNRRAKLRKKQ). The span at 141–151 (KDTIPSSQSRD) shows a compositional bias: polar residues. Over residues 293 to 307 (INSNNTSDKNNSNTN) the composition is skewed to low complexity. Acidic residues predominate over residues 308 to 323 (NDDDNDDNSNEDNDNS). The span at 324 to 333 (SEDKRNAKDN) shows a compositional bias: basic and acidic residues. Threonine 542 is subject to Phosphothreonine.

It localises to the nucleus. Regulator in phosphate metabolism and acts as a derepressor of another central regulator PHO5. Binds to the upstream activator sequence (UAS) of PHO5. It also binds to the TRP4, HIS4, and CYC1 promoters. The polypeptide is Regulatory protein PHO2 (PHO2) (Saccharomyces cerevisiae (strain ATCC 204508 / S288c) (Baker's yeast)).